The sequence spans 331 residues: Adenosine deaminase (331 aa).

His-12 and His-14 together coordinate Zn(2+). Substrate-binding residues include His-14 and Asp-16. Position 197 (His-197) interacts with Zn(2+). Glu-200 (proton donor) is an active-site residue. Asp-278 serves as a coordination point for Zn(2+).

It belongs to the metallo-dependent hydrolases superfamily. Adenosine and AMP deaminases family. Adenosine deaminase subfamily. Zn(2+) serves as cofactor.

The catalysed reaction is adenosine + H2O + H(+) = inosine + NH4(+). It carries out the reaction 2'-deoxyadenosine + H2O + H(+) = 2'-deoxyinosine + NH4(+). Its function is as follows. Catalyzes the hydrolytic deamination of adenosine and 2-deoxyadenosine. The protein is Adenosine deaminase of Shewanella halifaxensis (strain HAW-EB4).